A 159-amino-acid polypeptide reads, in one-letter code: L-alanine exporter AlaE (159 aa).

4 consecutive transmembrane segments (helical) span residues 17–37 (FAMV…VSGM), 48–68 (LSIP…DYLL), 86–106 (MVAY…AVGA), and 110–130 (QIIT…IVYG).

Belongs to the AlaE exporter family.

It is found in the cell inner membrane. Exports L-alanine. The chain is L-alanine exporter AlaE from Photobacterium profundum (strain SS9).